A 139-amino-acid chain; its full sequence is Transcription antitermination protein NusB (139 aa).

This sequence belongs to the NusB family.

Its function is as follows. Involved in transcription antitermination. Required for transcription of ribosomal RNA (rRNA) genes. Binds specifically to the boxA antiterminator sequence of the ribosomal RNA (rrn) operons. This is Transcription antitermination protein NusB from Edwardsiella ictaluri (strain 93-146).